Reading from the N-terminus, the 179-residue chain is Large ribosomal subunit protein uL5 (179 aa).

The protein belongs to the universal ribosomal protein uL5 family. Part of the 50S ribosomal subunit; part of the 5S rRNA/L5/L18/L25 subcomplex. Contacts the 5S rRNA and the P site tRNA. Forms a bridge to the 30S subunit in the 70S ribosome.

This is one of the proteins that bind and probably mediate the attachment of the 5S RNA into the large ribosomal subunit, where it forms part of the central protuberance. In the 70S ribosome it contacts protein S13 of the 30S subunit (bridge B1b), connecting the 2 subunits; this bridge is implicated in subunit movement. Contacts the P site tRNA; the 5S rRNA and some of its associated proteins might help stabilize positioning of ribosome-bound tRNAs. This is Large ribosomal subunit protein uL5 from Saccharophagus degradans (strain 2-40 / ATCC 43961 / DSM 17024).